The following is an 89-amino-acid chain: Elongation factor 1-beta (89 aa).

Belongs to the EF-1-beta/EF-1-delta family.

In terms of biological role, promotes the exchange of GDP for GTP in EF-1-alpha/GDP, thus allowing the regeneration of EF-1-alpha/GTP that could then be used to form the ternary complex EF-1-alpha/GTP/AAtRNA. The sequence is that of Elongation factor 1-beta from Methanococcus vannielii (strain ATCC 35089 / DSM 1224 / JCM 13029 / OCM 148 / SB).